A 534-amino-acid polypeptide reads, in one-letter code: uncharacterized protein (534 aa).

This is an uncharacterized protein from Escherichia coli (strain K12).